Reading from the N-terminus, the 949-residue chain is UvrABC system protein A (949 aa).

42–49 (GLSGSGKS) serves as a coordination point for ATP. The C4-type zinc finger occupies 262–289 (CPVCSYSLPELEPRLFSFNNPMGSCPTC). ABC transporter domains lie at 319-596 (WDKR…ENSV) and 616-945 (VNPD…KYLK). 649 to 656 (GVSGSGKS) serves as a coordination point for ATP. A C4-type zinc finger spans residues 748–774 (CEACQGDGVIKVEMHFLPDVYVPCEVC).

It belongs to the ABC transporter superfamily. UvrA family. Forms a heterotetramer with UvrB during the search for lesions.

It localises to the cytoplasm. Functionally, the UvrABC repair system catalyzes the recognition and processing of DNA lesions. UvrA is an ATPase and a DNA-binding protein. A damage recognition complex composed of 2 UvrA and 2 UvrB subunits scans DNA for abnormalities. When the presence of a lesion has been verified by UvrB, the UvrA molecules dissociate. This Neisseria meningitidis serogroup B (strain ATCC BAA-335 / MC58) protein is UvrABC system protein A.